We begin with the raw amino-acid sequence, 365 residues long: Putative ankyrin repeat protein R903 (365 aa).

ANK repeat units lie at residues 38 to 67, 68 to 97, 99 to 127, 129 to 158, 184 to 213, 214 to 243, 245 to 273, 275 to 298, 299 to 328, and 330 to 361; these read NINS…DIRF, QNNE…DIFI, NNFC…KFSN, SKPI…NINK, KFKD…GNIT, VSNN…RFPR, SNEL…SIVD, LLNI…LKNV, NLQK…NPDE, and RTYL…KLQS.

This chain is Putative ankyrin repeat protein R903, found in Acanthamoeba polyphaga mimivirus (APMV).